The sequence spans 338 residues: Tryptophan--tRNA ligase (338 aa).

ATP-binding positions include 11-13 and 19-20; these read QPS and GN. The 'HIGH' region signature appears at 12–20; that stretch reads PSGELSIGN. Asp-135 serves as a coordination point for L-tryptophan. Residues 147–149, Val-189, and 198–202 each bind ATP; these read GSD and KMSKS. The 'KMSKS' region motif lies at 198-202; it reads KMSKS.

It belongs to the class-I aminoacyl-tRNA synthetase family. As to quaternary structure, homodimer.

The protein resides in the cytoplasm. The enzyme catalyses tRNA(Trp) + L-tryptophan + ATP = L-tryptophyl-tRNA(Trp) + AMP + diphosphate + H(+). Functionally, catalyzes the attachment of tryptophan to tRNA(Trp). This is Tryptophan--tRNA ligase from Vibrio vulnificus (strain CMCP6).